A 556-amino-acid polypeptide reads, in one-letter code: MDKRHDPSRRIIAPHGTKLSCKSWFTEAPMRMLMNNLHPDVAERPEDLVVYGGIGRAARDWECYDKIIEVLQRLEEDETLLVQSGKPVGVFKTHSNAPRVIIANSNLVPHWANWEHFNELDKKGLAMYGQMTAGSWIYIGSQGIVQGTYETFAAMATKHFGGSSKGKWILTGGLGGMGGAQPLAGTMAGYSVLTCEVDETRIDFRLRTKYVDKKTDSLDEALAMIDEANKSGKPVSVGLLANAADVFAELVERGVTPDVVTDQTSAHDPLNGYLPQNWTLEYAAEMRKKDEAAVVKAAKQSMAVQVRAMLALQAAGAATTDYGNNIRQMAFEEGVENAFDFPGFVPAYVRPLFCEGIGPFRWVALSGDPEDIYKTDAKVKELIPDNPQLHNWLDMARERIAFQGLPSRICWVGLKDRARLALAFNEMVKSGELSAPVVIGRDHLDSGSVASPNRETESMLDGSDAVSDWPLMNALLNTASGATWVSLHHGGGVGMGFSQHSGVVIVADGSDEAAVRLGRVLWNDPATGVMRHADAGYDIAKKCAKEQNLDLPMLEK.

Residues 52–53, Q130, 176–178, E196, R201, 242–243, 263–267, 273–274, and Y322 contribute to the NAD(+) site; these read GG, GMG, NA, QTSAH, and YL. Residue C410 is part of the active site. G492 contacts NAD(+).

The protein belongs to the urocanase family. It depends on NAD(+) as a cofactor.

It localises to the cytoplasm. It catalyses the reaction 4-imidazolone-5-propanoate = trans-urocanate + H2O. It participates in amino-acid degradation; L-histidine degradation into L-glutamate; N-formimidoyl-L-glutamate from L-histidine: step 2/3. Catalyzes the conversion of urocanate to 4-imidazolone-5-propionate. The sequence is that of Urocanate hydratase from Shewanella sediminis (strain HAW-EB3).